The sequence spans 415 residues: Protein PIN-LIKES 4 (415 aa).

Topologically, residues 1–13 (MKLLELFIASSKP) are lumenal. The helical transmembrane segment at 14–34 (VVETLLITSVGFYLALDTVNL) threads the bilayer. The Cytoplasmic segment spans residues 35–44 (LGHDARKHLN). Residues 45-61 (NIVFYVFSPSLIGSRLA) traverse the membrane as a helical segment. The Lumenal segment spans residues 62–75 (DSVTYESLVKMWFM). The helical transmembrane segment at 76-96 (PVNVLLTFMIGSLLGWIVIVI) threads the bilayer. The Cytoplasmic segment spans residues 97 to 106 (TKPPSQLRGL). Residues 107–127 (IISCCASGNLGTMPLIIIPAI) form a helical membrane-spanning segment. At 128-143 (CKEKGGPFGDSESCEK) the chain is on the lumenal side. A helical transmembrane segment spans residues 144–161 (YGMGYVTLSMTAFFISVY). Over 162–244 (KHDTNWYVSG…RVVSLSKKVN (83 aa)) the chain is Cytoplasmic. The chain crosses the membrane as a helical span at residues 245-265 (LGSIFAPATIAAIIALVIGLI). Topologically, residues 266 to 285 (TPLRNLIIGTVAPFRVIQDS) are lumenal. Residues 286-306 (LTLLGDGAIPAMTLILGGNLL) form a helical membrane-spanning segment. The Cytoplasmic portion of the chain corresponds to 307-322 (KGMRRSEVRSSEMKNS). Residues 323–343 (CIIGVLVARYILLPVSGVLLV) form a helical membrane-spanning segment. Residues 344-355 (RGAYKLDLVTSE) are Lumenal-facing. A helical transmembrane segment spans residues 356-376 (PLYQFVLLLQYAVPPAMNLGT). The Cytoplasmic portion of the chain corresponds to 377-389 (KTQLFGAGESECS). Residues 390-410 (VIMLWTYSLAAVSLTVWPTFF) form a helical membrane-spanning segment. The Lumenal portion of the chain corresponds to 411 to 415 (MWLVT).

It belongs to the auxin efflux carrier (TC 2.A.69.2) family. In terms of tissue distribution, expressed in seedlings, rosette and cauline leaves, stems, flowers and siliques.

It localises to the endoplasmic reticulum membrane. In terms of biological role, involved in cellular auxin homeostasis by regulating auxin metabolism. Regulates intracellular auxin accumulation at the endoplasmic reticulum and thus auxin availability for nuclear auxin signaling. This chain is Protein PIN-LIKES 4, found in Arabidopsis thaliana (Mouse-ear cress).